We begin with the raw amino-acid sequence, 128 residues long: Large ribosomal subunit protein bL20 (128 aa).

The protein belongs to the bacterial ribosomal protein bL20 family.

In terms of biological role, binds directly to 23S ribosomal RNA and is necessary for the in vitro assembly process of the 50S ribosomal subunit. It is not involved in the protein synthesizing functions of that subunit. This chain is Large ribosomal subunit protein bL20, found in Anaplasma marginale (strain Florida).